The chain runs to 194 residues: Imidazoleglycerol-phosphate dehydratase (194 aa).

Belongs to the imidazoleglycerol-phosphate dehydratase family.

It is found in the cytoplasm. The catalysed reaction is D-erythro-1-(imidazol-4-yl)glycerol 3-phosphate = 3-(imidazol-4-yl)-2-oxopropyl phosphate + H2O. It functions in the pathway amino-acid biosynthesis; L-histidine biosynthesis; L-histidine from 5-phospho-alpha-D-ribose 1-diphosphate: step 6/9. This is Imidazoleglycerol-phosphate dehydratase from Listeria innocua serovar 6a (strain ATCC BAA-680 / CLIP 11262).